We begin with the raw amino-acid sequence, 414 residues long: Glucose-1-phosphate adenylyltransferase (414 aa).

Residues glycine 164, 184–185 (EK), and serine 204 each bind alpha-D-glucose 1-phosphate.

It belongs to the bacterial/plant glucose-1-phosphate adenylyltransferase family. As to quaternary structure, homotetramer.

The catalysed reaction is alpha-D-glucose 1-phosphate + ATP + H(+) = ADP-alpha-D-glucose + diphosphate. The protein operates within glycan biosynthesis; glycogen biosynthesis. Its function is as follows. Involved in the biosynthesis of ADP-glucose, a building block required for the elongation reactions to produce glycogen. Catalyzes the reaction between ATP and alpha-D-glucose 1-phosphate (G1P) to produce pyrophosphate and ADP-Glc. This is Glucose-1-phosphate adenylyltransferase from Acidothermus cellulolyticus (strain ATCC 43068 / DSM 8971 / 11B).